The sequence spans 381 residues: MAINHLLEIKEYGQSIWMDNLSRDIIQSGELKNLVENQGICGITSNPAIFEKAIANNVIYDADIEAGVRAGLPTYKIYESLIFADIRNACDILRPVYEASNKLDGYVSIEVPPTIAHDTQATINEARRYYQEIGRENVMIKIPGTEAGLPAVEQVIAEGINVNVTLLFSVQSYINTIWAYIRGLEKRLAEGKDISQIASVASFFLSRIDINIDGKIDAKLARGVDDISLEAKLMVVKGKVAIANAKIAYQEYKKIIESDQWQALAAKGAKVQRLLWASTSTKDPNYSDVMYVDELIGPDTVNTLPPATITACADHCEVANRVETGVAEAYQLIESLKDPDINIDINAVMDELLIEGINKFVQPFQSLMNSLEGKVKLLSPV.

Lysine 141 serves as the catalytic Schiff-base intermediate with substrate.

This sequence belongs to the transaldolase family. Type 2 subfamily.

Its subcellular location is the cytoplasm. The catalysed reaction is D-sedoheptulose 7-phosphate + D-glyceraldehyde 3-phosphate = D-erythrose 4-phosphate + beta-D-fructose 6-phosphate. It functions in the pathway carbohydrate degradation; pentose phosphate pathway; D-glyceraldehyde 3-phosphate and beta-D-fructose 6-phosphate from D-ribose 5-phosphate and D-xylulose 5-phosphate (non-oxidative stage): step 2/3. Its function is as follows. Transaldolase is important for the balance of metabolites in the pentose-phosphate pathway. The polypeptide is Transaldolase 2 (tal2) (Nostoc sp. (strain PCC 7120 / SAG 25.82 / UTEX 2576)).